The following is a 339-amino-acid chain: DNA-directed RNA polymerase subunit alpha (339 aa).

The alpha N-terminal domain (alpha-NTD) stretch occupies residues 1–235; it reads MVLQKNWQSL…DQLQLFINFD (235 aa). The tract at residues 251 to 339 is alpha C-terminal domain (alpha-CTD); that stretch reads FNRNLLRKVD…DLAKRLDETF (89 aa).

It belongs to the RNA polymerase alpha chain family. As to quaternary structure, homodimer. The RNAP catalytic core consists of 2 alpha, 1 beta, 1 beta' and 1 omega subunit. When a sigma factor is associated with the core the holoenzyme is formed, which can initiate transcription.

It catalyses the reaction RNA(n) + a ribonucleoside 5'-triphosphate = RNA(n+1) + diphosphate. Functionally, DNA-dependent RNA polymerase catalyzes the transcription of DNA into RNA using the four ribonucleoside triphosphates as substrates. This is DNA-directed RNA polymerase subunit alpha from Gluconobacter oxydans (strain 621H) (Gluconobacter suboxydans).